The following is a 378-amino-acid chain: Deoxyguanosinetriphosphate triphosphohydrolase-like protein (378 aa).

Residues 1–28 (MLAPYACQPGESRGRQQPESMSTFRSPF) form a disordered region. The segment covering 15 to 26 (RQQPESMSTFRS) has biased composition (polar residues). An HD domain is found at 62–198 (RLTHSIEVAQ…AAIADDVAYS (137 aa)).

This sequence belongs to the dGTPase family. Type 2 subfamily.

The sequence is that of Deoxyguanosinetriphosphate triphosphohydrolase-like protein from Cereibacter sphaeroides (strain ATCC 17025 / ATH 2.4.3) (Rhodobacter sphaeroides).